The chain runs to 970 residues: Protein translocase subunit SecA (970 aa).

Residues Gln99, 117-121 (GEGKT), and Asp631 each bind ATP.

It belongs to the SecA family. In terms of assembly, monomer and homodimer. Part of the essential Sec protein translocation apparatus which comprises SecA, SecYEG and auxiliary proteins SecDF. Other proteins may also be involved.

The protein localises to the cell inner membrane. It localises to the cytoplasm. The enzyme catalyses ATP + H2O + cellular proteinSide 1 = ADP + phosphate + cellular proteinSide 2.. Part of the Sec protein translocase complex. Interacts with the SecYEG preprotein conducting channel. Has a central role in coupling the hydrolysis of ATP to the transfer of proteins into and across the cell membrane, serving as an ATP-driven molecular motor driving the stepwise translocation of polypeptide chains across the membrane. The polypeptide is Protein translocase subunit SecA (Chlamydia pneumoniae (Chlamydophila pneumoniae)).